Reading from the N-terminus, the 251-residue chain is NAD kinase (251 aa).

The active-site Proton acceptor is the Asp-51. NAD(+) is bound by residues 51 to 52, Lys-56, 113 to 114, Lys-124, His-140, Asp-142, 153 to 158, and Ala-177; these read DG, NE, and TGYSLS.

This sequence belongs to the NAD kinase family. It depends on a divalent metal cation as a cofactor.

The protein resides in the cytoplasm. The enzyme catalyses NAD(+) + ATP = ADP + NADP(+) + H(+). In terms of biological role, involved in the regulation of the intracellular balance of NAD and NADP, and is a key enzyme in the biosynthesis of NADP. Catalyzes specifically the phosphorylation on 2'-hydroxyl of the adenosine moiety of NAD to yield NADP. This chain is NAD kinase, found in Thermosipho melanesiensis (strain DSM 12029 / CIP 104789 / BI429).